The following is a 549-amino-acid chain: Chaperonin GroEL (549 aa).

ATP contacts are provided by residues 30 to 33 (TLGP), Lys51, 87 to 91 (DGTTT), Gly415, and Asp495.

This sequence belongs to the chaperonin (HSP60) family. In terms of assembly, forms a cylinder of 14 subunits composed of two heptameric rings stacked back-to-back. Interacts with the co-chaperonin GroES.

The protein localises to the cytoplasm. It carries out the reaction ATP + H2O + a folded polypeptide = ADP + phosphate + an unfolded polypeptide.. In terms of biological role, together with its co-chaperonin GroES, plays an essential role in assisting protein folding. The GroEL-GroES system forms a nano-cage that allows encapsulation of the non-native substrate proteins and provides a physical environment optimized to promote and accelerate protein folding. This chain is Chaperonin GroEL, found in Hahella chejuensis (strain KCTC 2396).